Reading from the N-terminus, the 474-residue chain is MTNSPAPTTSGVVTRFAPSPTGFLHIGGARTALFNWLYARHTGGKFLVRVEDTDRERSTQAAVAAIFEGLDWLGMKSDEEVVFQHKKADRHREAVQQLLDTGRAYRCWMSVEDLALAREAARAGGPALRSPWRDAPPPNDPTAPHVIRFKGPLDGTTLVDDLVKGPVTFDNAELDDLVLLRADGAPTYNLAVVVDDHDMGVTHVIRGDDHLNNAARQTLIYQAMGWTLPAFGHIPLIHGPDGAKLSKRHGAQAVGEFQDMGYLPEGLRNYLARLGWGHGDDEVFSDAQAIEWFDVKDVVKAPARLDWAKLNFINSQHLHVAEDGRLADLTLKALQAQGAPLPDDAPARLLATVPQVKVGAKTILELAEHCAFALKVRPLALEEKTRNQLTDETVDRLKRLRAQLGAVPVWGLSELEVLLKSFAESEGVGFGKFGPSLRGILTGGSQAPDLNKIMTALGREESLGRLDDALASRA.

A 'HIGH' region motif is present at residues 18–28 (PSPTGFLHIGG). Positions 244-248 (KLSKR) match the 'KMSKS' region motif. K247 serves as a coordination point for ATP.

The protein belongs to the class-I aminoacyl-tRNA synthetase family. Glutamate--tRNA ligase type 1 subfamily. In terms of assembly, monomer.

Its subcellular location is the cytoplasm. The catalysed reaction is tRNA(Glu) + L-glutamate + ATP = L-glutamyl-tRNA(Glu) + AMP + diphosphate. Functionally, catalyzes the attachment of glutamate to tRNA(Glu) in a two-step reaction: glutamate is first activated by ATP to form Glu-AMP and then transferred to the acceptor end of tRNA(Glu). In Caulobacter sp. (strain K31), this protein is Glutamate--tRNA ligase.